The primary structure comprises 423 residues: Serine hydroxymethyltransferase (423 aa).

Residues Leu125 and 129–131 each bind (6S)-5,6,7,8-tetrahydrofolate; that span reads GHL. Position 234 is an N6-(pyridoxal phosphate)lysine (Lys234). Glu249 serves as a coordination point for (6S)-5,6,7,8-tetrahydrofolate.

Belongs to the SHMT family. In terms of assembly, homodimer. Requires pyridoxal 5'-phosphate as cofactor.

Its subcellular location is the cytoplasm. It carries out the reaction (6R)-5,10-methylene-5,6,7,8-tetrahydrofolate + glycine + H2O = (6S)-5,6,7,8-tetrahydrofolate + L-serine. The protein operates within one-carbon metabolism; tetrahydrofolate interconversion. Its pathway is amino-acid biosynthesis; glycine biosynthesis; glycine from L-serine: step 1/1. Functionally, catalyzes the reversible interconversion of serine and glycine with tetrahydrofolate (THF) serving as the one-carbon carrier. This reaction serves as the major source of one-carbon groups required for the biosynthesis of purines, thymidylate, methionine, and other important biomolecules. Also exhibits THF-independent aldolase activity toward beta-hydroxyamino acids, producing glycine and aldehydes, via a retro-aldol mechanism. This chain is Serine hydroxymethyltransferase, found in Thermobifida fusca (strain YX).